The following is a 236-amino-acid chain: MAATLLDVCAVVPAAGFGRRMQTECPKQYLSIGNKTILEHSVHALLAHPRVTRVVIAISLGDHRFAQLPLANHPQITVVDGGNERADSVLAGLQAVAKAQWVLVHDAARPCLHQDDLARLLAISENSRVGGILASPVRDTMKRGEPGKNAIAHTVERADLWHALTPQFFPRELLHDCLTRALNEGATITDEASALEYCGFHPALVEGRADNIKVTRPEDLALAEFYLTRTIHQEKA.

This sequence belongs to the IspD/TarI cytidylyltransferase family. IspD subfamily. In terms of assembly, homodimer.

The catalysed reaction is 2-C-methyl-D-erythritol 4-phosphate + CTP + H(+) = 4-CDP-2-C-methyl-D-erythritol + diphosphate. The protein operates within isoprenoid biosynthesis; isopentenyl diphosphate biosynthesis via DXP pathway; isopentenyl diphosphate from 1-deoxy-D-xylulose 5-phosphate: step 2/6. Catalyzes the formation of 4-diphosphocytidyl-2-C-methyl-D-erythritol from CTP and 2-C-methyl-D-erythritol 4-phosphate (MEP). The chain is 2-C-methyl-D-erythritol 4-phosphate cytidylyltransferase from Salmonella agona (strain SL483).